A 408-amino-acid polypeptide reads, in one-letter code: Argininosuccinate synthase (408 aa).

ATP is bound by residues 11-19 and A38; that span reads AYSGGLDTS. Positions 91 and 96 each coordinate L-citrulline. G121 serves as a coordination point for ATP. L-aspartate contacts are provided by T123, N127, and D128. Residue N127 coordinates L-citrulline. 5 residues coordinate L-citrulline: R131, S182, S191, E267, and Y279.

The protein belongs to the argininosuccinate synthase family. Type 1 subfamily. In terms of assembly, homotetramer.

It is found in the cytoplasm. The catalysed reaction is L-citrulline + L-aspartate + ATP = 2-(N(omega)-L-arginino)succinate + AMP + diphosphate + H(+). It participates in amino-acid biosynthesis; L-arginine biosynthesis; L-arginine from L-ornithine and carbamoyl phosphate: step 2/3. This is Argininosuccinate synthase from Zymomonas mobilis subsp. mobilis (strain ATCC 31821 / ZM4 / CP4).